A 348-amino-acid polypeptide reads, in one-letter code: Lipopolysaccharide heptosyltransferase 2 (348 aa).

This sequence belongs to the glycosyltransferase 9 family.

The enzyme catalyses an L-alpha-D-Hep-(1-&gt;5)-[alpha-Kdo-(2-&gt;4)]-alpha-Kdo-(2-&gt;6)-lipid A + ADP-L-glycero-beta-D-manno-heptose = an L-alpha-D-Hep-(1-&gt;3)-L-alpha-D-Hep-(1-&gt;5)-[alpha-Kdo-(2-&gt;4)]-alpha-Kdo-(2-&gt;6)-lipid A + ADP + H(+). It participates in bacterial outer membrane biogenesis; LPS core biosynthesis. Its function is as follows. Glycosyltransferase involved in the biosynthesis of the core oligosaccharide region of lipopolysaccharide (LPS). Catalyzes the addition of the second heptose unit to the heptosyl-Kdo2-lipid A module. This chain is Lipopolysaccharide heptosyltransferase 2, found in Salmonella typhimurium (strain LT2 / SGSC1412 / ATCC 700720).